Here is a 128-residue protein sequence, read N- to C-terminus: MLPLLALLLLIGPSVCTTAGDREELAFGAEAESWVTVNLKGIPVPSIELKLQELKRSRTRQFYGLMGKRVGGYQLGRIVQDLLGTRGLSIEGTCRQAASQQRARPGAVTRESLQSREEDEAPLTTSNV.

Positions 1–16 (MLPLLALLLLIGPSVC) are cleaved as a signal peptide. A propeptide spanning residues 17–54 (TTAGDREELAFGAEAESWVTVNLKGIPVPSIELKLQEL) is cleaved from the precursor. Residue M66 is modified to Methionine amide. A propeptide spanning residues 69–128 (RVGGYQLGRIVQDLLGTRGLSIEGTCRQAASQQRARPGAVTRESLQSREEDEAPLTTSNV) is cleaved from the precursor. A disordered region spans residues 96-128 (QAASQQRARPGAVTRESLQSREEDEAPLTTSNV).

This sequence belongs to the tachykinin family. Expressed in hematopoietic cells with highest levels in pre- and pro-B cells but not in later developmental stages. Also detected in uterus, skeletal muscle, brain, spleen, stomach, skin and lactating mammary gland and in cells of myeloid lineage including dendritic and microglial cells and macrophages. In uterus, highest expression is observed in non-pregnant diestrus mice and in day 5 pregnant mice. Compared with mice in diestrus, decreases 2.6-fold in uteri from non-pregnant mice in estrus and 10.2-fold in day 17 pregnant mice. Detected at sites of chronic inflammation such as granulomas.

The protein resides in the secreted. Tachykinins are active peptides which excite neurons, evoke behavioral responses, are potent vasodilators and secretagogues, and contract (directly or indirectly) many smooth muscles. Hemokinin induces plasma extravasation, mast cell degranulation, muscle contraction, salivary secretion and scratching behavior. Increases sperm motility. Induces potent analgesic effects and may play a role in pain modulation. Promotes survival of bone marrow B lineage cells and of cultured LPS-stimulated pre-B cells and may act as an autocrine factor required for B-cell survival and proliferation. Lowers systemic arterial pressure following intravenous injection. Induces interferon-gamma production and may play a role in the inflammatory response. Shows potent affinity and specificity for the NK-1 receptor. This is Tachykinin-4 from Mus musculus (Mouse).